The sequence spans 108 residues: Anthranilate 1,2-dioxygenase ferredoxin subunit (108 aa).

The 97-residue stretch at 9–105 (WHPLGAIDEF…IRIVDGQVEV (97 aa)) folds into the Rieske domain. Residues Cys49, His51, Cys68, and His71 each coordinate [2Fe-2S] cluster.

It belongs to the bacterial ring-hydroxylating dioxygenase ferredoxin component family. Part of a multicomponent enzyme system composed of a reductase (AndAa), a ferredoxin (AndAb) and a two-subunit oxygenase component (AndAc and AndAd). It depends on [2Fe-2S] cluster as a cofactor.

It participates in aromatic compound metabolism; anthranilate degradation via hydroxylation; catechol from anthranilate: step 1/1. Its function is as follows. Part of the multicomponent anthranilate dioxygenase, that converts anthranilate to catechol. This protein seems to be a 2Fe-2S ferredoxin. The protein is Anthranilate 1,2-dioxygenase ferredoxin subunit of Burkholderia cepacia (Pseudomonas cepacia).